Consider the following 325-residue polypeptide: Flotillin-like protein FloA (325 aa).

A run of 2 helical transmembrane segments spans residues 4–24 (LGIVFLAAVVLLFVFLFFSFI) and 26–46 (VGLWISAWAAGVRVPLLTLVA).

This sequence belongs to the flotillin-like FloA family. As to quaternary structure, homooligomerizes.

Its subcellular location is the cell membrane. It localises to the membrane raft. Its function is as follows. Found in functional membrane microdomains (FMM) that may be equivalent to eukaryotic membrane rafts. FMMs are highly dynamic and increase in number as cells age. Flotillins are thought to be important factors in membrane fluidity. The polypeptide is Flotillin-like protein FloA (Thermus thermophilus (strain ATCC BAA-163 / DSM 7039 / HB27)).